Here is a 277-residue protein sequence, read N- to C-terminus: Large ribosomal subunit protein uL2 (277 aa).

The interval 222-277 (GVAMNPVDHPHGGGEGRTSGGRHPVTPWGKPTKGKKTRSNKATDKFIMRSRHQRKK) is disordered.

It belongs to the universal ribosomal protein uL2 family. Part of the 50S ribosomal subunit. Forms a bridge to the 30S subunit in the 70S ribosome.

Functionally, one of the primary rRNA binding proteins. Required for association of the 30S and 50S subunits to form the 70S ribosome, for tRNA binding and peptide bond formation. It has been suggested to have peptidyltransferase activity; this is somewhat controversial. Makes several contacts with the 16S rRNA in the 70S ribosome. This chain is Large ribosomal subunit protein uL2, found in Brucella canis (strain ATCC 23365 / NCTC 10854 / RM-666).